The chain runs to 301 residues: Vomeronasal type-1 receptor 4 (301 aa).

Over 1–5 the chain is Extracellular; that stretch reads MASRY. A helical transmembrane segment spans residues 6–26; that stretch reads VAVGMILSQTVVGVLGSFSVL. Residues 27–48 lie on the Cytoplasmic side of the membrane; that stretch reads LHYLSFYCTGCRLRSTDLIVKH. The chain crosses the membrane as a helical span at residues 49 to 69; that stretch reads LIVANFLALRCKGVPQTMAAF. Residues 70–88 lie on the Extracellular side of the membrane; sequence GVRYFLNALGCKLVFYLHR. The helical transmembrane segment at 89-109 threads the bilayer; it reads VGRGVSIGTTCLLSVFQVITV. Topologically, residues 110 to 126 are cytoplasmic; that stretch reads SSRKSRWAKLKEKAPKH. Residues 127-147 form a helical membrane-spanning segment; that stretch reads VGFSVLLCWIVCMLVNIIFPM. Over 148–185 the chain is Extracellular; that stretch reads YVTGKWNYTNITVNEDLGYCSGGGNNKIAQTLRAMLLS. Asn-154 and Asn-157 each carry an N-linked (GlcNAc...) asparagine glycan. Residues 186-206 traverse the membrane as a helical segment; the sequence is FPDVLCLGLMLWVSSSMVCIL. Topologically, residues 207–234 are cytoplasmic; it reads HRHKQRVQHIDRSNLSPRASPENRATQS. Residues 235 to 255 traverse the membrane as a helical segment; the sequence is ILILVSTFVSSYTLSCLFQVC. Residues 256–264 are Extracellular-facing; sequence MALLDNPNS. Residues 265–285 form a helical membrane-spanning segment; sequence LLVNTSALMSVCFPTLSPFVL. Over 286–301 the chain is Cytoplasmic; that stretch reads MSCDPSVYRFCFAWKR.

It belongs to the G-protein coupled receptor 1 family.

It localises to the cell membrane. Functionally, putative pheromone receptor. This is Vomeronasal type-1 receptor 4 (VN1R4) from Homo sapiens (Human).